A 536-amino-acid chain; its full sequence is Inactive beta-amylase 9 (536 aa).

Ser47 is modified (phosphoserine). Residues 511-536 form a disordered region; the sequence is QASEAEVEAETASIGSGTGAPSLQTA.

This sequence belongs to the glycosyl hydrolase 14 family. As to expression, mostly expressed in young floral buds, flowers and roots, and, to a later extent, in stems and leaves.

It is found in the cytoplasm. The chain is Inactive beta-amylase 9 (BAM9) from Arabidopsis thaliana (Mouse-ear cress).